Here is a 452-residue protein sequence, read N- to C-terminus: tRNA modification GTPase MnmE (452 aa).

(6S)-5-formyl-5,6,7,8-tetrahydrofolate contacts are provided by Arg-25, Glu-81, and Lys-120. The 160-residue stretch at 216–375 folds into the TrmE-type G domain; sequence GITVVIAGEP…LKNHLKNTAG (160 aa). Asn-226 lines the K(+) pocket. Residues 226–231, 245–251, and 270–273 contribute to the GTP site; these read NVGKSS, TDIAGTT, and DTAG. Ser-230 lines the Mg(2+) pocket. Positions 245, 247, and 250 each coordinate K(+). Thr-251 is a binding site for Mg(2+). Lys-452 contributes to the (6S)-5-formyl-5,6,7,8-tetrahydrofolate binding site.

Belongs to the TRAFAC class TrmE-Era-EngA-EngB-Septin-like GTPase superfamily. TrmE GTPase family. Homodimer. Heterotetramer of two MnmE and two MnmG subunits. K(+) is required as a cofactor.

The protein localises to the cytoplasm. Functionally, exhibits a very high intrinsic GTPase hydrolysis rate. Involved in the addition of a carboxymethylaminomethyl (cmnm) group at the wobble position (U34) of certain tRNAs, forming tRNA-cmnm(5)s(2)U34. In Coxiella burnetii (strain Dugway 5J108-111), this protein is tRNA modification GTPase MnmE.